The chain runs to 239 residues: DNA repair protein RecO (239 aa).

This sequence belongs to the RecO family.

Its function is as follows. Involved in DNA repair and RecF pathway recombination. The protein is DNA repair protein RecO of Glaesserella parasuis serovar 5 (strain SH0165) (Haemophilus parasuis).